The sequence spans 239 residues: uncharacterized protein (239 aa).

6 helical membrane-spanning segments follow: residues 30–50 (VALL…IELI), 76–96 (LYLG…IFII), 107–127 (LIPI…FGYI), 157–177 (FIIL…FQIL), 188–208 (MMLS…AIIT), and 214–234 (LIQL…ILVL).

This sequence belongs to the TatC family.

It localises to the plastid. The protein localises to the chloroplast membrane. This is an uncharacterized protein from Cyanidium caldarium (Red alga).